A 397-amino-acid polypeptide reads, in one-letter code: Elongation factor Tu (397 aa).

A tr-type G domain is found at lysine 10–glutamate 206. Positions glycine 19–threonine 26 are G1. GTP is bound at residue glycine 19–threonine 26. Residue threonine 26 coordinates Mg(2+). Residues glycine 60–asparagine 64 are G2. The interval aspartate 81 to glycine 84 is G3. GTP contacts are provided by residues aspartate 81–histidine 85 and asparagine 136–aspartate 139. The segment at asparagine 136–aspartate 139 is G4. The interval serine 174–leucine 176 is G5.

Belongs to the TRAFAC class translation factor GTPase superfamily. Classic translation factor GTPase family. EF-Tu/EF-1A subfamily. In terms of assembly, monomer.

It localises to the cytoplasm. The catalysed reaction is GTP + H2O = GDP + phosphate + H(+). Its function is as follows. GTP hydrolase that promotes the GTP-dependent binding of aminoacyl-tRNA to the A-site of ribosomes during protein biosynthesis. The sequence is that of Elongation factor Tu from Clostridium botulinum (strain Loch Maree / Type A3).